The sequence spans 501 residues: MRLVSRRRLKGLALVAFALIGITIFVRILMEFQLEREVSFYKKFFRLKKDGLHGVYNPIDIKQIPKQTIDDLYRAKMETVSASKPIDWSKYAYVNYVTEPNYLCNTLIMFHALIKKFGTKAKLELLISNELFKSEIQSRNEQVQRILKKIRELDSEQIVIKEVQNIVKPTDQSPWNESLTKLLVFGLTEYERIIYLDNDAILQDKMDELFFLPNDITFAAPLTYWFMSEKDLEKTYKEVQHDKMSINLNKYTKQLSNRIRNGKEIYNHLPALPQSLYLNSDRVAKEILDSTSSASPLFDADSLKKVGKVKFASNLMVIKPSQETYDYIINDCLPRIVNKKEKYDMDLINEELYNLRHVVSRQVTLFRKLRSAFKPSILVLPFGTYGILTGSIRKPQEHMIMRNDILGYKNIDDEGNEIQKSIEEVVLNNKYIHFSDFPLGKPWAYSSFDQLKCRVDPASSKDVAADQKNCDVWNSIYESYFTQRMVCSKDDSPKASEIQAA.

Topologically, residues methionine 1–glycine 11 are cytoplasmic. A helical; Signal-anchor for type II membrane protein transmembrane segment spans residues leucine 12 to phenylalanine 32. Residues glutamine 33 to alanine 501 lie on the Lumenal side of the membrane. N-linked (GlcNAc...) asparagine glycosylation occurs at asparagine 176. Residues aspartate 197–aspartate 199 carry the DXD motif.

Belongs to the GNT1 family.

It is found in the golgi apparatus membrane. The protein resides in the vacuole membrane. Its function is as follows. N-acetylglucosaminyltransferase involved in the Golgi-specific modification of N-linked glycans. This is Glucose N-acetyltransferase 1 (GNT1) from Candida glabrata (strain ATCC 2001 / BCRC 20586 / JCM 3761 / NBRC 0622 / NRRL Y-65 / CBS 138) (Yeast).